Here is an 843-residue protein sequence, read N- to C-terminus: INO80 complex subunit D-B (843 aa).

Residues 159-175 are compositionally biased toward basic and acidic residues; sequence TLNHKQKQQDHSVDTNH. Disordered stretches follow at residues 159-216, 221-240, 503-550, 695-726, and 791-843; these read TLNH…PTVR, FKTSSSLQDTHQGSKDSTDN, YHHH…LPQG, SLLHPSEDAFPPSPPSPQPPLTPPSSVGHLTD, and LSTP…TAAP. Composition is skewed to polar residues over residues 176 to 187, 197 to 216, and 221 to 231; these read LRTSSLPSTLSH, RATQTPINPSSPRAATPTVR, and FKTSSSLQDTH. Residues 503-540 are compositionally biased toward basic residues; sequence YHHHQQIQRHRPLKKAKPPALSKKHKKKGKRGTQRRPQ. Pro residues predominate over residues 705–717; it reads PPSPPSPQPPLTP. Residues 796 to 821 are compositionally biased toward low complexity; it reads QPSSALSALPQSSQTRSTTTSPTSQT.

Belongs to the INO80D family. Component of the chromatin-remodeling INO80 complex.

It localises to the nucleus. Its function is as follows. Putative regulatory component of the chromatin remodeling INO80 complex which is involved in transcriptional regulation, DNA replication and probably DNA repair. The protein is INO80 complex subunit D-B (ino80db) of Danio rerio (Zebrafish).